The sequence spans 211 residues: MKGKFIVFEGIDGSGKTTQINQLSKWLISSDLIPENNKLVITREPGGTKLGKSIRSLLLDTSIEKSPDSITELLLYAADRSQHINEIIRPTLDQGDWVISDRFCGSTLAYQGYGRKLDINLIKDLEAIATQGIAPDITFLLDIPIEESIRRRRNRKDDRIEKEGREFLSNVSLGFQALSEDSNWKKISAIDSKEKIISEIKSEIKKLIKNK.

10–17 (GIDGSGKT) provides a ligand contact to ATP.

It belongs to the thymidylate kinase family.

It carries out the reaction dTMP + ATP = dTDP + ADP. Its function is as follows. Phosphorylation of dTMP to form dTDP in both de novo and salvage pathways of dTTP synthesis. This is Thymidylate kinase from Prochlorococcus marinus (strain NATL2A).